A 451-amino-acid chain; its full sequence is FAD-dependent monooxygenase adrH (451 aa).

FAD-binding residues include glutamate 39, glycine 53, and arginine 112. The active site involves tyrosine 196. Residues aspartate 288 and alanine 301 each coordinate FAD. Asparagine 385 carries an N-linked (GlcNAc...) asparagine glycan. A helical membrane pass occupies residues 426-446 (TLLWVSSLALFLFFPWLGSYL).

The protein belongs to the paxM FAD-dependent monooxygenase family. Requires FAD as cofactor.

Its subcellular location is the membrane. It functions in the pathway secondary metabolite biosynthesis; terpenoid biosynthesis. Functionally, FAD-dependent monooxygenase; part of the gene cluster that mediates the biosynthesis of andrastins, meroterpenoid compounds that exhibit inhibitory activity against ras farnesyltransferase, suggesting that they could be promising leads for antitumor agents. The first step of the pathway is the synthesis of 3,5-dimethylorsellinic acid (DMOA) by the polyketide synthase adrD via condensation of one acetyl-CoA starter unit with 3 malonyl-CoA units and 2 methylations. DMAO is then converted to farnesyl-DMAO by the prenyltransferase adrG. The methyltransferase adrK catalyzes the methylation of the carboxyl group of farnesyl-DMAO to farnesyl-DMAO methyl ester which is further converted to epoxyfarnesyl-DMAO methyl ester by the FAD-dependent monooxygenase adrH. The terpene cyclase adrI then catalyzes the carbon skeletal rearrangement to generate the andrastin E, the first compound in the pathway having the andrastin scaffold, with the tetracyclic ring system. The post-cyclization tailoring enzymes adrF, adrE, adrJ, and adrA, are involved in the conversion of andrastin E into andrastin A. The short chain dehydrogenase adrF is responsible for the oxidation of the C-3 a hydroxyl group of andrastin E to yield the corresponding ketone, andrastin D. The ketoreductase adrE stereoselectively reduces the carbonyl moiety to reverse the stereochemistry of the C-3 position to yield andrastin F. The acetyltransferase adrJ is the acetyltransferase that attaches the acetyl group to the C-3 hydroxyl group of andrastin F to yield andrastin C. Finally, the cytochrome P450 monooxygenase adrA catalyzes two sequential oxidation reactions of the C-23 methyl group, to generate the corresponding alcohol andrastin B, and aldehyde andrastin A. The protein is FAD-dependent monooxygenase adrH of Penicillium rubens (strain ATCC 28089 / DSM 1075 / NRRL 1951 / Wisconsin 54-1255) (Penicillium chrysogenum).